A 442-amino-acid polypeptide reads, in one-letter code: Hydroxycinnamoyltransferase 2 (442 aa).

Active-site proton acceptor residues include His-159 and Asp-389.

Belongs to the plant acyltransferase family. Expressed in roots and leaves. Expressed at low levels in stems and seeds.

Functionally, hydroxycinnamoyl transferase that catalyzes the transfer of an acyl from p-coumaryol-CoA to various acyl acceptors. Can use feruloyl-CoA and caffeoyl-CoA as acyl donors. This chain is Hydroxycinnamoyltransferase 2, found in Oryza sativa subsp. japonica (Rice).